The primary structure comprises 204 residues: Holliday junction branch migration complex subunit RuvA (204 aa).

The interval M1 to C64 is domain I. The segment at T65–F143 is domain II. Positions I144–S154 are flexible linker. Positions S154–M204 are domain III.

Belongs to the RuvA family. Homotetramer. Forms an RuvA(8)-RuvB(12)-Holliday junction (HJ) complex. HJ DNA is sandwiched between 2 RuvA tetramers; dsDNA enters through RuvA and exits via RuvB. An RuvB hexamer assembles on each DNA strand where it exits the tetramer. Each RuvB hexamer is contacted by two RuvA subunits (via domain III) on 2 adjacent RuvB subunits; this complex drives branch migration. In the full resolvosome a probable DNA-RuvA(4)-RuvB(12)-RuvC(2) complex forms which resolves the HJ.

It is found in the cytoplasm. In terms of biological role, the RuvA-RuvB-RuvC complex processes Holliday junction (HJ) DNA during genetic recombination and DNA repair, while the RuvA-RuvB complex plays an important role in the rescue of blocked DNA replication forks via replication fork reversal (RFR). RuvA specifically binds to HJ cruciform DNA, conferring on it an open structure. The RuvB hexamer acts as an ATP-dependent pump, pulling dsDNA into and through the RuvAB complex. HJ branch migration allows RuvC to scan DNA until it finds its consensus sequence, where it cleaves and resolves the cruciform DNA. The polypeptide is Holliday junction branch migration complex subunit RuvA (Syntrophus aciditrophicus (strain SB)).